A 233-amino-acid chain; its full sequence is MGQKVHPNGIRLGIVKPWNSTWYANTKEFADNLDSDFKVRKYLTKELEKASVSRIVIERPAKSIRVTIHTARPGIVIGKKGEDVEKLRKVVADIAGVPAQINIAEVRKPELDAKLVADSITSQLERRVMFRRAMKRAVQNAMRLGAKGIKVEVSGRLGGAEIARTEWYREGRVPLHTLRADIDYNTSEAHTTYGVIGVKVWIFKGEILGGMAAVEQPEKPSAQPKKQQRKGRK.

One can recognise a KH type-2 domain in the interval 39–107 (VRKYLTKELE…PAQINIAEVR (69 aa)). The segment at 214–233 (VEQPEKPSAQPKKQQRKGRK) is disordered.

It belongs to the universal ribosomal protein uS3 family. As to quaternary structure, part of the 30S ribosomal subunit. Forms a tight complex with proteins S10 and S14.

Its function is as follows. Binds the lower part of the 30S subunit head. Binds mRNA in the 70S ribosome, positioning it for translation. This chain is Small ribosomal subunit protein uS3, found in Pectobacterium atrosepticum (strain SCRI 1043 / ATCC BAA-672) (Erwinia carotovora subsp. atroseptica).